Reading from the N-terminus, the 693-residue chain is Phenoloxidase subunit 2 (693 aa).

Positions methionine 1–arginine 51 are excised as a propeptide. Asparagine 26 and asparagine 64 each carry an N-linked (GlcNAc...) asparagine glycan. Histidine 213, histidine 217, and histidine 243 together coordinate Cu cation. Catalysis depends on glutamate 351, which acts as the Proton acceptor. The Cu cation site is built by histidine 366, histidine 370, and histidine 406. Residues asparagine 462 and asparagine 494 are each glycosylated (N-linked (GlcNAc...) asparagine). 2 disulfide bridges follow: cysteine 583/cysteine 627 and cysteine 585/cysteine 634. Asparagine 680 is a glycosylation site (N-linked (GlcNAc...) asparagine).

Heterodimer. Cu(2+) is required as a cofactor. Post-translationally, the N-terminus is blocked. As to expression, synthesized by hemocytes and released into the hemolymph plasma.

The protein resides in the secreted. It catalyses the reaction 2 L-dopa + O2 = 2 L-dopaquinone + 2 H2O. The catalysed reaction is L-tyrosine + O2 = L-dopaquinone + H2O. In terms of biological role, this is a copper-containing oxidase that functions in the formation of pigments such as melanins and other polyphenolic compounds. Catalyzes the rate-limiting conversions of tyrosine to DOPA, DOPA to DOPA-quinone and possibly 5,6 dihydroxyindole to indole-5'6 quinone. The sequence is that of Phenoloxidase subunit 2 from Bombyx mori (Silk moth).